The sequence spans 829 residues: Periplasmic nitrate reductase (829 aa).

The tat-type signal signal peptide spans 1-29 (MKMTRRAFVKANAAASAAAVAGVTLPATA). Residues 41 to 97 (ITWDKAPCRFCGTGCSVLVGTQNGKVVATQGDPEAPVNKGLNCIKGYFLSKIMYGKD) form the 4Fe-4S Mo/W bis-MGD-type domain. The [4Fe-4S] cluster site is built by C48, C51, C55, and C83. Mo-bis(molybdopterin guanine dinucleotide) contacts are provided by residues K85, Q152, N177, C181, 214–221 (WGSNMAEM), 245–249 (STYYH), 264–266 (QSD), M374, Q378, N484, 510–511 (SD), K533, D560, and 718–727 (TGRVLEHWHT). A substrate-binding site is contributed by F794. Residues N802 and K819 each coordinate Mo-bis(molybdopterin guanine dinucleotide).

This sequence belongs to the prokaryotic molybdopterin-containing oxidoreductase family. NasA/NapA/NarB subfamily. In terms of assembly, component of the periplasmic nitrate reductase NapAB complex composed of NapA and NapB. [4Fe-4S] cluster serves as cofactor. Mo-bis(molybdopterin guanine dinucleotide) is required as a cofactor. Predicted to be exported by the Tat system. The position of the signal peptide cleavage has not been experimentally proven.

The protein localises to the periplasm. It catalyses the reaction 2 Fe(II)-[cytochrome] + nitrate + 2 H(+) = 2 Fe(III)-[cytochrome] + nitrite + H2O. Functionally, catalytic subunit of the periplasmic nitrate reductase complex NapAB. Receives electrons from NapB and catalyzes the reduction of nitrate to nitrite. The polypeptide is Periplasmic nitrate reductase (Vibrio atlanticus (strain LGP32) (Vibrio splendidus (strain Mel32))).